Reading from the N-terminus, the 65-residue chain is Large ribosomal subunit protein bL35 (65 aa).

The protein belongs to the bacterial ribosomal protein bL35 family.

This is Large ribosomal subunit protein bL35 from Chromobacterium violaceum (strain ATCC 12472 / DSM 30191 / JCM 1249 / CCUG 213 / NBRC 12614 / NCIMB 9131 / NCTC 9757 / MK).